Consider the following 792-residue polypeptide: Ribonucleoside-diphosphate reductase large subunit (792 aa).

Substrate is bound by residues T200, 215–216 (SC), G246, 415–419 (NLCAE), and 606–610 (PTAGT). Residues C216 and C431 are joined by a disulfide bond. The active-site Proton acceptor is the N415. The active-site Cysteine radical intermediate is C417. E419 (proton acceptor) is an active-site residue. The disordered stretch occupies residues 758-781 (SPPHSGMKQDGAWLPGPKNPEEES).

It belongs to the ribonucleoside diphosphate reductase large chain family. In terms of assembly, heterotetramer composed of a homodimer of the large subunit (R1) and a homodimer of the small subunit (R2). Larger multisubunit protein complex are also active, composed of (R1)n(R2)n.

It catalyses the reaction a 2'-deoxyribonucleoside 5'-diphosphate + [thioredoxin]-disulfide + H2O = a ribonucleoside 5'-diphosphate + [thioredoxin]-dithiol. Its function is as follows. Ribonucleoside-diphosphate reductase holoenzyme provides the precursors necessary for viral DNA synthesis. Allows virus growth in non-dividing cells, as well as reactivation from latency in infected hosts. Catalyzes the biosynthesis of deoxyribonucleotides from the corresponding ribonucleotides. The sequence is that of Ribonucleoside-diphosphate reductase large subunit from Human herpesvirus 8 type P (isolate GK18) (HHV-8).